A 522-amino-acid polypeptide reads, in one-letter code: Transactivator/viroplasmin protein (522 aa).

Positions 111-126 (QGIQIPQKSEPNSSVA) are enriched in polar residues. 2 disordered regions span residues 111–133 (QGIQ…AESG) and 491–522 (SADS…KASG).

The protein belongs to the caulimoviridae viroplasmin family.

Its subcellular location is the host cytoplasm. Enhances the ribosomal termination-reinitiation event leading to the translation of major open reading frames on the polycistronic viral RNAs. The protein is Transactivator/viroplasmin protein of Arabidopsis thaliana (Mouse-ear cress).